Consider the following 268-residue polypeptide: uncharacterized protein (268 aa).

The helical transmembrane segment at 150-172 threads the bilayer; it reads LYSIADFLAYTFTYFYLATVGLA.

It localises to the host membrane. This is an uncharacterized protein from Sulfolobus islandicus rod-shaped virus 1 (SIRV-1).